A 339-amino-acid polypeptide reads, in one-letter code: DNA-directed RNA polymerase subunit alpha (339 aa).

The segment at 1-233 (MVREEVAGST…DLFLPFLHAE (233 aa)) is alpha N-terminal domain (alpha-NTD). Residues 264-339 (KKGIPLNCIF…IDLLKNKLSF (76 aa)) are alpha C-terminal domain (alpha-CTD).

This sequence belongs to the RNA polymerase alpha chain family. In terms of assembly, in plastids the minimal PEP RNA polymerase catalytic core is composed of four subunits: alpha, beta, beta', and beta''. When a (nuclear-encoded) sigma factor is associated with the core the holoenzyme is formed, which can initiate transcription.

It localises to the plastid. The protein resides in the chloroplast. It catalyses the reaction RNA(n) + a ribonucleoside 5'-triphosphate = RNA(n+1) + diphosphate. DNA-dependent RNA polymerase catalyzes the transcription of DNA into RNA using the four ribonucleoside triphosphates as substrates. This Thinopyrum elongatum (Tall wheatgrass) protein is DNA-directed RNA polymerase subunit alpha.